We begin with the raw amino-acid sequence, 358 residues long: DNA integrity scanning protein DisA (358 aa).

In terms of domain architecture, DAC spans 6–144 (RPTLREAVAR…RGERHVLTDS (139 aa)). ATP is bound by residues Gly-73, Leu-91, and 104 to 108 (TRHRS).

It belongs to the DisA family. Homooctamer. Mg(2+) serves as cofactor.

The enzyme catalyses 2 ATP = 3',3'-c-di-AMP + 2 diphosphate. Participates in a DNA-damage check-point. DisA forms globular foci that rapidly scan along the chromosomes searching for lesions. Functionally, also has diadenylate cyclase activity, catalyzing the condensation of 2 ATP molecules into cyclic di-AMP (c-di-AMP). c-di-AMP likely acts as a signaling molecule that may couple DNA integrity with a cellular process. This is DNA integrity scanning protein DisA from Mycobacterium tuberculosis (strain ATCC 25177 / H37Ra).